The chain runs to 46 residues: Toxin Up-1 (46 aa).

Its subcellular location is the secreted. The protein localises to the nematocyst. It is found in the target cell membrane. Functionally, this toxin is a potent hemolysin devoid of enzymatic activity. Its hemolytic activity is inhibited by sphingomyelin but not by cholesterol. In erythrocyte membranes, it causes numerous cell membrane ruptures. It also exerces cytotoxicity to different cell lines. It exerces a positive inotropic effect. Also causes hemorrhage and necrosis by dilation of the blood vessels in the skin, and vascular leakage of fluids and rupture of alveolar walls of the lungs. Is a potent ichtyotoxin. May act as a pore-forming toxin. The sequence is that of Toxin Up-1 from Urticina piscivora (Fish-eating sea anemone).